The chain runs to 188 residues: Elongation factor P-like protein (188 aa).

The protein belongs to the elongation factor P family.

This chain is Elongation factor P-like protein, found in Xanthomonas oryzae pv. oryzae (strain MAFF 311018).